The chain runs to 103 residues: Insulin (103 aa).

An N-terminal signal peptide occupies residues 1–20 (IQSLPLLALLALSGPGTSHA). Intrachain disulfides connect Cys-27–Cys-89, Cys-39–Cys-102, and Cys-88–Cys-93. Positions 53-80 (DAEHPLVNGPLHGEVGDLPFQQEEFEKV) are cleaved as a propeptide — c peptide.

This sequence belongs to the insulin family. In terms of assembly, heterodimer of a B chain and an A chain linked by two disulfide bonds.

The protein resides in the secreted. In terms of biological role, insulin decreases blood glucose concentration. It increases cell permeability to monosaccharides, amino acids and fatty acids. It accelerates glycolysis, the pentose phosphate cycle, and glycogen synthesis in liver. This is Insulin (INS) from Selasphorus rufus (Rufous hummingbird).